We begin with the raw amino-acid sequence, 213 residues long: Histone H1.3 (213 aa).

At serine 1 the chain carries N-acetylserine. The segment covering 1 to 15 has biased composition (low complexity); sequence SEAPAETAAPAPAEK. Residues 1–41 are disordered; the sequence is SEAPAETAAPAPAEKSPAKKKKAAKKPGAGAAKRKAAGPPV. N6-acetyllysine is present on lysine 15. N6-(beta-hydroxybutyryl)lysine is present on residues lysine 35 and lysine 53. Residues 37–110 form the H15 domain; sequence AGPPVSELIT…GASGSFKLDK (74 aa). Arginine 55 bears the Citrulline mark. An N6-(beta-hydroxybutyryl)lysine mark is found at lysine 65, lysine 86, and lysine 91. A disordered region spans residues 92–213; the sequence is GTLVETKGTG…AKKTAAKKKK (122 aa). The residue at position 105 (serine 105) is a Phosphoserine. Position 107 is an N6-(beta-hydroxybutyryl)lysine (lysine 107). The span at 107–119 shows a compositional bias: basic and acidic residues; it reads KLDKKAASGEAKP. 3 stretches are compositionally biased toward basic residues: residues 120–131, 138–170, and 179–213; these read KPKKAGAAKPKK, KKPK…KVAK, and KSPK…KKKK.

This sequence belongs to the histone H1/H5 family. H1 histones are progressively phosphorylated during the cell cycle, becoming maximally phosphorylated during late G2 phase and M phase, and being dephosphorylated sharply thereafter. Post-translationally, citrullination at Arg-55 (H1R54ci) by PADI4 takes place within the DNA-binding site of H1 and results in its displacement from chromatin and global chromatin decondensation, thereby promoting pluripotency and stem cell maintenance.

The protein resides in the nucleus. It is found in the chromosome. Histones H1 are necessary for the condensation of nucleosome chains into higher-order structures. This is Histone H1.3 from Oryctolagus cuniculus (Rabbit).